The chain runs to 380 residues: Erythronate-4-phosphate dehydrogenase (380 aa).

Positions 45 and 66 each coordinate substrate. Asp-146 and Thr-174 together coordinate NAD(+). Arg-207 is a catalytic residue. Asp-231 provides a ligand contact to NAD(+). Glu-236 is a catalytic residue. Residue His-253 is the Proton donor of the active site. NAD(+) is bound at residue Gly-256. Residue Tyr-257 coordinates substrate.

The protein belongs to the D-isomer specific 2-hydroxyacid dehydrogenase family. PdxB subfamily. In terms of assembly, homodimer.

The protein localises to the cytoplasm. The catalysed reaction is 4-phospho-D-erythronate + NAD(+) = (R)-3-hydroxy-2-oxo-4-phosphooxybutanoate + NADH + H(+). It participates in cofactor biosynthesis; pyridoxine 5'-phosphate biosynthesis; pyridoxine 5'-phosphate from D-erythrose 4-phosphate: step 2/5. Its function is as follows. Catalyzes the oxidation of erythronate-4-phosphate to 3-hydroxy-2-oxo-4-phosphonooxybutanoate. The polypeptide is Erythronate-4-phosphate dehydrogenase (Pseudomonas fluorescens (strain Pf0-1)).